We begin with the raw amino-acid sequence, 409 residues long: uncharacterized protein (409 aa).

10 helical membrane-spanning segments follow: residues 22–42 (ILIIIGICHMLNDSLQAVIPA), 58–78 (LGIIAFTLNMVSSVMQPVVGW), 99–119 (GILGLAFAPSFITILCCVFFI), 174–194 (FGAVWFTLVAALAVMFLMYIA), 217–237 (NTAITKSVVSALIIIIFLIFA), 266–286 (SYIFVFLLFGAIGTFLGGPLA), 293–312 (FVILGSLLCSAPLAIVLPFA), 316–338 (LAYGVLALIGLVLMSSFSVTVVY), 353–373 (LTVGLAFGMGAIGAVALGALI), and 378–398 (LTPTMIAIAFLPVLGILAFLL).

This sequence belongs to the major facilitator superfamily.

The protein localises to the cell membrane. This is an uncharacterized protein from Bacillus subtilis (strain 168).